A 285-amino-acid chain; its full sequence is ADNRRPIWNLGHMVNAVKQIPTFLNDGANAIEADITFKGAVPTYSYHGTPCDFGRDCIRWEYFDVFLRTLREYTTPGNSKYREKFILFVLDLKTGSLNNHEVRKAGENVAKGLLENYWNNGNNGGRAYVVLSLPDIAHYEFIRTFKEVLKTAGHENLLDKVGYDLSGPYWPSLPSLDSVHEAFKKAGVDGHVWLSDGLTNWAKLGDMARLKEIIKSRDSENGFISKVYYWSVDKYSTTRTALDVGVDGIMTNYPYVIIDVLNENGYKDKYRLATYDDNPWETFKN.

Residue His-12 is part of the active site. The Mg(2+) site is built by Glu-32 and Asp-34. The active-site Nucleophile is His-47. Cys-51 and Cys-57 are joined by a disulfide. Position 91 (Asp-91) interacts with Mg(2+).

This sequence belongs to the arthropod phospholipase D family. Class I subfamily. Requires Mg(2+) as cofactor. As to expression, expressed by the venom gland.

The protein localises to the secreted. The enzyme catalyses an N-(acyl)-sphingosylphosphocholine = an N-(acyl)-sphingosyl-1,3-cyclic phosphate + choline. The catalysed reaction is an N-(acyl)-sphingosylphosphoethanolamine = an N-(acyl)-sphingosyl-1,3-cyclic phosphate + ethanolamine. It catalyses the reaction a 1-acyl-sn-glycero-3-phosphocholine = a 1-acyl-sn-glycero-2,3-cyclic phosphate + choline. It carries out the reaction a 1-acyl-sn-glycero-3-phosphoethanolamine = a 1-acyl-sn-glycero-2,3-cyclic phosphate + ethanolamine. Dermonecrotic toxins cleave the phosphodiester linkage between the phosphate and headgroup of certain phospholipids (sphingolipid and lysolipid substrates), forming an alcohol (often choline) and a cyclic phosphate. This toxin acts on sphingomyelin (SM) (228.2 U/mg). It may also act on ceramide phosphoethanolamine (CPE), lysophosphatidylcholine (LPC) and lysophosphatidylethanolamine (LPE), but not on lysophosphatidylserine (LPS), and lysophosphatidylglycerol (LPG). It acts by transphosphatidylation, releasing exclusively cyclic phosphate products as second products. Induces dermonecrosis, hemolysis, increased vascular permeability, edema, inflammatory response, and platelet aggregation. Is lethal to mice. The protein is Dermonecrotic toxin LlSicTox-alphaIII2 of Loxosceles laeta (South American recluse spider).